Reading from the N-terminus, the 579-residue chain is Ribonucleoside-diphosphate reductase small chain (579 aa).

Positions 130, 160, and 163 each coordinate Fe cation. Residue Tyr167 is part of the active site. Residues Glu225, Glu258, and His261 each contribute to the Fe cation site. A Fido domain is found at 435-579 (DMTWTLKDVH…VSVFVDQFYR (145 aa)).

It belongs to the ribonucleoside diphosphate reductase small chain family. As to quaternary structure, heterotetramer composed of a homodimer of the large subunit (R1) and a homodimer of the small subunit (R2). Larger multisubunit protein complex are also active, composed of (R1)n(R2)n. Requires Fe cation as cofactor.

It catalyses the reaction a 2'-deoxyribonucleoside 5'-diphosphate + [thioredoxin]-disulfide + H2O = a ribonucleoside 5'-diphosphate + [thioredoxin]-dithiol. Ribonucleoside-diphosphate reductase holoenzyme provides the precursors necessary for viral DNA synthesis. Allows virus growth in non-dividing cells. Catalyzes the biosynthesis of deoxyribonucleotides from the corresponding ribonucleotides. This Magallana gigas (Pacific oyster) protein is Ribonucleoside-diphosphate reductase small chain.